Consider the following 404-residue polypeptide: CCA-adding enzyme (404 aa).

2 residues coordinate ATP: glycine 27 and arginine 30. CTP-binding residues include glycine 27 and arginine 30. 2 residues coordinate Mg(2+): aspartate 40 and aspartate 42. ATP is bound by residues arginine 111, aspartate 154, arginine 157, arginine 160, and arginine 163. Arginine 111, aspartate 154, arginine 157, arginine 160, and arginine 163 together coordinate CTP.

This sequence belongs to the tRNA nucleotidyltransferase/poly(A) polymerase family. Bacterial CCA-adding enzyme type 3 subfamily. Homodimer. Mg(2+) is required as a cofactor.

The enzyme catalyses a tRNA precursor + 2 CTP + ATP = a tRNA with a 3' CCA end + 3 diphosphate. It catalyses the reaction a tRNA with a 3' CCA end + 2 CTP + ATP = a tRNA with a 3' CCACCA end + 3 diphosphate. Functionally, catalyzes the addition and repair of the essential 3'-terminal CCA sequence in tRNAs without using a nucleic acid template. Adds these three nucleotides in the order of C, C, and A to the tRNA nucleotide-73, using CTP and ATP as substrates and producing inorganic pyrophosphate. tRNA 3'-terminal CCA addition is required both for tRNA processing and repair. Also involved in tRNA surveillance by mediating tandem CCA addition to generate a CCACCA at the 3' terminus of unstable tRNAs. While stable tRNAs receive only 3'-terminal CCA, unstable tRNAs are marked with CCACCA and rapidly degraded. The sequence is that of CCA-adding enzyme from Geobacillus sp. (strain WCH70).